Reading from the N-terminus, the 378-residue chain is Response regulator aspartate phosphatase A (378 aa).

TPR repeat units lie at residues 101 to 137, 148 to 181, 183 to 215, 222 to 255, 261 to 294, and 336 to 369; these read YYFN…VSDD, AEIF…TVRR, QCEF…AKKE, SSAL…CKSE, PHSI…ARQY, and EELA…QKQI.

Belongs to the Rap family. In terms of assembly, homodimer. Interacts with its substrate, phosphorylated Spo0F, and its inhibitor, the PhrA pentapeptide. The RapA dimer forms a stable complex with two molecules of phosphorylated Spo0F. The complex is dissociated after dephosphorylation of Spo0F by RapA. Mn(2+) serves as cofactor.

The protein resides in the cytoplasm. With respect to regulation, phosphatase activity is inhibited by the phosphatase regulator PhrA. Interaction with PhrA dissociates the RapA-Spo0F complex. Activity is abolished in the presence of EDTA. Involved in the regulation of sporulation. Acts as a phosphatase that specifically dephosphorylates the sporulation initiation phosphotransferase Spo0F and inhibits its activity. This is Response regulator aspartate phosphatase A from Bacillus subtilis (strain 168).